A 270-amino-acid chain; its full sequence is Tryptophan synthase alpha chain (270 aa).

Catalysis depends on proton acceptor residues glutamate 51 and aspartate 62.

Belongs to the TrpA family. As to quaternary structure, tetramer of two alpha and two beta chains.

It catalyses the reaction (1S,2R)-1-C-(indol-3-yl)glycerol 3-phosphate + L-serine = D-glyceraldehyde 3-phosphate + L-tryptophan + H2O. Its pathway is amino-acid biosynthesis; L-tryptophan biosynthesis; L-tryptophan from chorismate: step 5/5. In terms of biological role, the alpha subunit is responsible for the aldol cleavage of indoleglycerol phosphate to indole and glyceraldehyde 3-phosphate. The protein is Tryptophan synthase alpha chain of Methanothermobacter thermautotrophicus (strain ATCC 29096 / DSM 1053 / JCM 10044 / NBRC 100330 / Delta H) (Methanobacterium thermoautotrophicum).